Here is a 253-residue protein sequence, read N- to C-terminus: Sulfoacetaldehyde reductase (253 aa).

6-30 (FITGATSGFGRAAAHRFAAAGWSLV) lines the NADP(+) pocket. Residue S139 coordinates substrate. The active-site Proton acceptor is the Y152.

Belongs to the short-chain dehydrogenases/reductases (SDR) family. Homodimer and heterotetramer.

The enzyme catalyses 2-hydroxyethane-1-sulfonate + NADP(+) = sulfoacetaldehyde + NADPH + H(+). It functions in the pathway organosulfur degradation. In terms of biological role, catalyzes the formation of isethionate from 2-sulfoacetaldehyde in the deaminative pathway of taurine. The enzyme is specific for NADPH; NADH is not a substrate. Responsible for most of the activity observed in taurine-grown cells. In Chromohalobacter salexigens (strain ATCC BAA-138 / DSM 3043 / CIP 106854 / NCIMB 13768 / 1H11), this protein is Sulfoacetaldehyde reductase (isfD).